The following is a 459-amino-acid chain: ATP synthase subunit beta (459 aa).

ATP is bound at residue 148 to 155 (GGAGVGKT).

It belongs to the ATPase alpha/beta chains family. As to quaternary structure, F-type ATPases have 2 components, CF(1) - the catalytic core - and CF(0) - the membrane proton channel. CF(1) has five subunits: alpha(3), beta(3), gamma(1), delta(1), epsilon(1). CF(0) has three main subunits: a(1), b(2) and c(9-12). The alpha and beta chains form an alternating ring which encloses part of the gamma chain. CF(1) is attached to CF(0) by a central stalk formed by the gamma and epsilon chains, while a peripheral stalk is formed by the delta and b chains.

Its subcellular location is the cell inner membrane. The enzyme catalyses ATP + H2O + 4 H(+)(in) = ADP + phosphate + 5 H(+)(out). Functionally, produces ATP from ADP in the presence of a proton gradient across the membrane. The catalytic sites are hosted primarily by the beta subunits. The polypeptide is ATP synthase subunit beta (Thiobacillus denitrificans (strain ATCC 25259 / T1)).